We begin with the raw amino-acid sequence, 380 residues long: Actin-like protein arp10 (380 aa).

This sequence belongs to the actin family. ARP10 subfamily.

It is found in the cytoplasm. The protein localises to the cytoskeleton. The protein resides in the nucleus. This Schizosaccharomyces pombe (strain 972 / ATCC 24843) (Fission yeast) protein is Actin-like protein arp10 (arp10).